The sequence spans 247 residues: 2,3-bisphosphoglycerate-dependent phosphoglycerate mutase (247 aa).

Residues 8-15 (RHGESTWN), 21-22 (TG), R60, 87-90 (ERHY), K98, 114-115 (RR), and 183-184 (GN) contribute to the substrate site. Residue H9 is the Tele-phosphohistidine intermediate of the active site. Catalysis depends on E87, which acts as the Proton donor/acceptor.

This sequence belongs to the phosphoglycerate mutase family. BPG-dependent PGAM subfamily. In terms of assembly, homodimer.

It catalyses the reaction (2R)-2-phosphoglycerate = (2R)-3-phosphoglycerate. It participates in carbohydrate degradation; glycolysis; pyruvate from D-glyceraldehyde 3-phosphate: step 3/5. Catalyzes the interconversion of 2-phosphoglycerate and 3-phosphoglycerate. The polypeptide is 2,3-bisphosphoglycerate-dependent phosphoglycerate mutase (Delftia acidovorans (strain DSM 14801 / SPH-1)).